A 1523-amino-acid polypeptide reads, in one-letter code: uncharacterized protein (1523 aa).

Residues 1 to 89 (MLPTSSNNEE…GSSNMNPYDR (89 aa)) form a disordered region. ATP is bound at residue 993-1000 (SPFGCGKS). Polar residues-rich tracts occupy residues 1463-1476 (TSRQ…NEYN) and 1485-1498 (QSNN…SVTN). The segment at 1463 to 1498 (TSRQSKQQRANEYNSQHKHVKRQSNNDYGSQRSVTN) is disordered.

It belongs to the DNA2/NAM7 helicase family.

This is an uncharacterized protein from Caenorhabditis elegans.